A 754-amino-acid chain; its full sequence is Pentatricopeptide repeat-containing protein At3g53700, chloroplastic (754 aa).

Residues 1-72 (MAFSSCLKFY…DSAALRLFNL (72 aa)) constitute a chloroplast transit peptide. PPR repeat units follow at residues 82-116 (EPALYEEILLRLGRSGSFDDMKKILEDMKSSRCEM), 117-152 (GTSTFLILIESYAQFELQDEILSVVDWMIDEFGLKP), 153-187 (DTHFYNRMLNLLVDGNSLKLVEISHAKMSVWGIKP), 188-222 (DVSTFNVLIKALCRAHQLRPAILMLEDMPSYGLVP), 223-257 (DEKTFTTVMQGYIEEGDLDGALRIREQMVEFGCSW), 258-288 (SNVSVNVIVHGFCKEGRVEDALNFIQEMSNQ), 294-328 (DQYTFNTLVNGLCKAGHVKHAIEIMDVMLQEGYDP), 329-363 (DVYTYNSVISGLCKLGEVKEAVEVLDQMITRDCSP), 364-398 (NTVTYNTLISTLCKENQVEEATELARVLTSKGILP), 399-433 (DVCTFNSLIQGLCLTRNHRVAMELFEEMRSKGCEP), 434-468 (DEFTYNMLIDSLCSKGKLDEALNMLKQMELSGCAR), 469-503 (SVITYNTLIDGFCKANKTREAEEIFDEMEVHGVSR), 504-538 (NSVTYNTLIDGLCKSRRVEDAAQLMDQMIMEGQKP), 539-573 (DKYTYNSLLTHFCRGGDIKKAADIVQAMTSNGCEP), 574-608 (DIVTYGTLISGLCKAGRVEVASKLLRSIQMKGINL), 609-643 (TPHAYNPVIQGLFRKRKTTEAINLFREMLEQNEAP), and 645-680 (DAVSYRIVFRGLCNGGGPIREAVDFLVELLEKGFVP).

Belongs to the PPR family. P subfamily.

The protein localises to the plastid. The protein resides in the chloroplast. In terms of biological role, may be involved in female gametophyte development. In Arabidopsis thaliana (Mouse-ear cress), this protein is Pentatricopeptide repeat-containing protein At3g53700, chloroplastic (MEE40).